We begin with the raw amino-acid sequence, 271 residues long: Shikimate dehydrogenase (NADP(+)) (271 aa).

Shikimate-binding positions include 14–16 (SLS) and Thr61. Residue Lys65 is the Proton acceptor of the active site. Positions 86 and 101 each coordinate shikimate. Residues 125-129 (GAGGA) and Ile212 each bind NADP(+). Residue Tyr214 participates in shikimate binding. Gly235 provides a ligand contact to NADP(+).

Belongs to the shikimate dehydrogenase family. Homodimer.

It carries out the reaction shikimate + NADP(+) = 3-dehydroshikimate + NADPH + H(+). Its pathway is metabolic intermediate biosynthesis; chorismate biosynthesis; chorismate from D-erythrose 4-phosphate and phosphoenolpyruvate: step 4/7. Functionally, involved in the biosynthesis of the chorismate, which leads to the biosynthesis of aromatic amino acids. Catalyzes the reversible NADPH linked reduction of 3-dehydroshikimate (DHSA) to yield shikimate (SA). The protein is Shikimate dehydrogenase (NADP(+)) of Clostridium perfringens (strain 13 / Type A).